Consider the following 518-residue polypeptide: U-box domain-containing protein 57 (518 aa).

A coiled-coil region spans residues 86-142; the sequence is EEVRKVHILEEEIVTLKHQADTYLVQKEKAVTAYDQLKHERDNAVQQVNELRDQSTH. The Protein kinase domain maps to 159-409; sequence FKNAREVGDT…RPDLLNEVWI (251 aa). The U-box domain occupies 434–508; the sequence is SVPAAFICPI…HGYLQQQQPN (75 aa).

It carries out the reaction S-ubiquitinyl-[E2 ubiquitin-conjugating enzyme]-L-cysteine + [acceptor protein]-L-lysine = [E2 ubiquitin-conjugating enzyme]-L-cysteine + N(6)-ubiquitinyl-[acceptor protein]-L-lysine.. The protein operates within protein modification; protein ubiquitination. Its function is as follows. Possesses E3 ubiquitin-protein ligase in vitro. May be involved in cell death signaling. The polypeptide is U-box domain-containing protein 57 (PUB57) (Oryza sativa subsp. japonica (Rice)).